The sequence spans 319 residues: MKPENKLPVLDLISAEMKTVVNTLQPDLPSWPATGTIAEQRQYYTLERRFWNAGAPEMATRAYMVPTKYGQVETRLFCPQPDSPATLFYLHGGGFILGNLDTHDRIMRLLASYSQCTVIGIDYPLSPEARFPQAIEEIVAACCYFHQQAEDYQINMSRIGFAGDSAGAMLALASALWLRDKQIDCGKIAGVLLWYGLYGLRDSVTRRLLGGVWDGLTQQDLQMYEEAYLSNDADRESPYYCLFNNDLTREVPPCFIAGAEFDPLLDDSRLLYQTLAAHQQPCEFKLYPGTLHAFLHYSRMMKTADEALRDGAQFFTAQL.

The short motif at histidine 91–glycine 93 is the Involved in the stabilization of the negatively charged intermediate by the formation of the oxyanion hole element. Active-site residues include serine 165, aspartate 262, and histidine 292.

This sequence belongs to the 'GDXG' lipolytic enzyme family. As to quaternary structure, homodimer. Interacts with MalT and MelA.

The protein localises to the cytoplasm. Functionally, displays esterase activity towards short chain fatty esters (acyl chain length of up to 8 carbons). Able to hydrolyze triacetylglycerol (triacetin) and tributyrylglycerol (tributyrin), but not trioleylglycerol (triolein) or cholesterol oleate. Negatively regulates MalT activity by antagonizing maltotriose binding. Inhibits MelA galactosidase activity. The protein is Acetyl esterase of Escherichia coli (strain 55989 / EAEC).